The sequence spans 552 residues: Carotenoid cleavage dioxygenase 8 homolog A, chloroplastic (552 aa).

The N-terminal 43 residues, Met1–Arg43, are a transit peptide targeting the chloroplast. Residues Ser32–Arg73 form a disordered region. Polar residues predominate over residues Ser59 to Val72. Fe cation is bound by residues His239, His289, His356, and His543.

Belongs to the carotenoid oxygenase family. Fe(2+) is required as a cofactor. Highly expressed in panicles, inflorescences and parenchyma cells of the root stele, and at lower levels in shoot apex, leaf buds and xylem parenchyma cells of the stem.

Its subcellular location is the plastid. It is found in the chloroplast. Functionally, may be involved in strigolactones biosynthesis. This is Carotenoid cleavage dioxygenase 8 homolog A, chloroplastic (CCD8A) from Oryza sativa subsp. japonica (Rice).